The sequence spans 619 residues: Translation initiation factor eIF2B subunit delta (619 aa).

Residues 21–32 (GDYLDSKQEGKP) show a composition bias toward basic and acidic residues. The disordered stretch occupies residues 21-251 (GDYLDSKQEG…PKQRGKITKK (231 aa)). Residues 42 to 56 (TNTSPVSIPTIISPP) are compositionally biased toward low complexity. The span at 57-84 (LGSNNSNYGKSPKSSYDNKQTSPLLSAS) shows a compositional bias: polar residues. The segment covering 85–98 (NNRKNNNNNNNNNN) has biased composition (low complexity). The span at 99 to 125 (ATSPKDSSIIGKNNVNSDLSKVSSSLN) shows a compositional bias: polar residues. Residues 136 to 199 (STSSTPTSTP…KQQSKQQATQ (64 aa)) are compositionally biased toward low complexity. The span at 200–244 (QDKKDKEQQQQQQDKQDKESNEIKGSKEVAKDGQHGVKQFDDPKQ) shows a compositional bias: basic and acidic residues.

It belongs to the eIF-2B alpha/beta/delta subunits family. As to quaternary structure, component of the translation initiation factor 2B (eIF2B) complex which is a heterodecamer of two sets of five different subunits: alpha, beta, gamma, delta and epsilon. Subunits alpha, beta and delta comprise a regulatory subcomplex and subunits epsilon and gamma comprise a catalytic subcomplex. Within the complex, the hexameric regulatory complex resides at the center, with the two heterodimeric catalytic subcomplexes bound on opposite sides.

Its subcellular location is the cytoplasm. It is found in the cytosol. Acts as a component of the translation initiation factor 2B (eIF2B) complex, which catalyzes the exchange of GDP for GTP on eukaryotic initiation factor 2 (eIF2) gamma subunit. Its guanine nucleotide exchange factor activity is repressed when bound to eIF2 complex phosphorylated on the alpha subunit, thereby limiting the amount of methionyl-initiator methionine tRNA available to the ribosome and consequently global translation is repressed. This Dictyostelium discoideum (Social amoeba) protein is Translation initiation factor eIF2B subunit delta (eif2b4).